The primary structure comprises 503 residues: Major facilitator superfamily domain-containing protein 4A (503 aa).

12 consecutive transmembrane segments (helical) span residues 19 to 39 (LTYW…GPTL), 53 to 73 (ITWV…LGGV), 82 to 102 (LFLL…IPFC), 105 to 125 (VGVL…IDTI), 139 to 159 (AIFL…SPLI), 214 to 234 (YAFW…FYLI), 289 to 309 (IWNA…TLFM), 338 to 358 (GYLP…SIPV), 366 to 386 (SMLF…LLSQ), 392 to 412 (MFVG…SMLA), 427 to 447 (VLVT…GSVM), and 455 to 475 (FLVC…VLLV). The segment at 484–503 (SEDSACKPPGLDGEATSYQS) is disordered.

Belongs to the major facilitator superfamily.

Its subcellular location is the membrane. The polypeptide is Major facilitator superfamily domain-containing protein 4A (mfsd4a) (Xenopus tropicalis (Western clawed frog)).